A 494-amino-acid chain; its full sequence is Putative NAD kinase 3 (494 aa).

Belongs to the NAD kinase family.

It carries out the reaction NAD(+) + ATP = ADP + NADP(+) + H(+). The polypeptide is Putative NAD kinase 3 (Oryza sativa subsp. japonica (Rice)).